A 247-amino-acid polypeptide reads, in one-letter code: Transcription factor bHLH92 (247 aa).

The bHLH domain maps to 85–134; the sequence is ERSRRHMLKERTRREKQKQSYLALHSLLPFATKNDKNSIVEKAVDEIAKL.

Homodimer.

Its subcellular location is the nucleus. The protein is Transcription factor bHLH92 (BHLH92) of Arabidopsis thaliana (Mouse-ear cress).